The primary structure comprises 654 residues: MKVIVFAYHEIGYIGLSCLIKLGFKVLSVITHIDDHASEKIFFSSVKKKSLKHKIPVFYPKNINNLKWIDYLSKLKPDIIFSFYYRKILSEDILKIPKLGSFNLHGSLLPKYRGCSPLNWVLINGEKTTGVTLHRMTKKIDHGSILSQYSIKIEEKDTSKSLYKKLCYASMYILNKTLPMILKNKINEIDCTDDFSSYFHKRYPKDGLIDWNQSANNIYNLIRALTKPWPGAFSYLFDKKIIIWKSKISFESYKTPGTILNFNPLIISCKKKSLEILSAQYTECNILNKRNIENISRIKGKKLIIKNIKSFKNLKKILILGVNGFIGYHITNLLLKYNNYKIYGIDIKNNLVKSFIGNEKFCFIKGDIKQYYNWVKKKIKKCDIILPLIAIARPMQYIKNPLKVFKIDFEENLKIIRYCVKYKKRIIFPSTSEVYGMCKDDYFDEENSNLVTGAIKNQRWIYSSSKQLLDRIIWAYGVKNNLNFTIFRPFNWIGPGLDDFKIAEKQNARVTTQIIFNLINGLPVTIVNNGNQKRCFTDIDDGIEALFEIIKNKNNKCNKKIINIGNPHNEYTIMQLTKIIINIIYSNNRNYNFPKFSGFNMLSGTNYYGEGYQDIDRRKPNIDIAKKLLNWTPKTKIRITLRKIINFFINNNTS.

The formyltransferase ArnAFT stretch occupies residues 1-303; that stretch reads MKVIVFAYHE…NISRIKGKKL (303 aa). His105 functions as the Proton donor; for formyltransferase activity in the catalytic mechanism. A (6R)-10-formyltetrahydrofolate-binding site is contributed by 137 to 141; sequence TKKID. The interval 313 to 654 is dehydrogenase ArnADH; it reads NLKKILILGV…INFFINNNTS (342 aa). Residues Asp346 and 367–368 each bind NAD(+); that span reads DI. UDP-alpha-D-glucuronate-binding positions include Ala392, Tyr397, and 431 to 432; that span reads TS. The Proton acceptor; for decarboxylase activity role is filled by Glu433. UDP-alpha-D-glucuronate is bound by residues Arg459, Asn491, 532–534, and Tyr612; that span reads QKR. The active-site Proton donor; for decarboxylase activity is Arg618.

This sequence in the N-terminal section; belongs to the Fmt family. UDP-L-Ara4N formyltransferase subfamily. It in the C-terminal section; belongs to the NAD(P)-dependent epimerase/dehydratase family. UDP-glucuronic acid decarboxylase subfamily. Homohexamer, formed by a dimer of trimers.

It catalyses the reaction UDP-alpha-D-glucuronate + NAD(+) = UDP-beta-L-threo-pentopyranos-4-ulose + CO2 + NADH. The enzyme catalyses UDP-4-amino-4-deoxy-beta-L-arabinose + (6R)-10-formyltetrahydrofolate = UDP-4-deoxy-4-formamido-beta-L-arabinose + (6S)-5,6,7,8-tetrahydrofolate + H(+). The protein operates within nucleotide-sugar biosynthesis; UDP-4-deoxy-4-formamido-beta-L-arabinose biosynthesis; UDP-4-deoxy-4-formamido-beta-L-arabinose from UDP-alpha-D-glucuronate: step 1/3. Its pathway is nucleotide-sugar biosynthesis; UDP-4-deoxy-4-formamido-beta-L-arabinose biosynthesis; UDP-4-deoxy-4-formamido-beta-L-arabinose from UDP-alpha-D-glucuronate: step 3/3. It functions in the pathway bacterial outer membrane biogenesis; lipopolysaccharide biosynthesis. Its function is as follows. Bifunctional enzyme that catalyzes the oxidative decarboxylation of UDP-glucuronic acid (UDP-GlcUA) to UDP-4-keto-arabinose (UDP-Ara4O) and the addition of a formyl group to UDP-4-amino-4-deoxy-L-arabinose (UDP-L-Ara4N) to form UDP-L-4-formamido-arabinose (UDP-L-Ara4FN). The modified arabinose is attached to lipid A and is required for resistance to polymyxin and cationic antimicrobial peptides. The sequence is that of Bifunctional polymyxin resistance protein ArnA from Wigglesworthia glossinidia brevipalpis.